The following is a 477-amino-acid chain: Glycogen synthase (477 aa).

Lysine 15 is an ADP-alpha-D-glucose binding site.

It belongs to the glycosyltransferase 1 family. Bacterial/plant glycogen synthase subfamily.

The enzyme catalyses [(1-&gt;4)-alpha-D-glucosyl](n) + ADP-alpha-D-glucose = [(1-&gt;4)-alpha-D-glucosyl](n+1) + ADP + H(+). Its pathway is glycan biosynthesis; glycogen biosynthesis. Functionally, synthesizes alpha-1,4-glucan chains using ADP-glucose. The protein is Glycogen synthase of Shigella flexneri.